The chain runs to 244 residues: Leucyl/phenylalanyl-tRNA--protein transferase (244 aa).

This sequence belongs to the L/F-transferase family.

It localises to the cytoplasm. The enzyme catalyses N-terminal L-lysyl-[protein] + L-leucyl-tRNA(Leu) = N-terminal L-leucyl-L-lysyl-[protein] + tRNA(Leu) + H(+). The catalysed reaction is N-terminal L-arginyl-[protein] + L-leucyl-tRNA(Leu) = N-terminal L-leucyl-L-arginyl-[protein] + tRNA(Leu) + H(+). It catalyses the reaction L-phenylalanyl-tRNA(Phe) + an N-terminal L-alpha-aminoacyl-[protein] = an N-terminal L-phenylalanyl-L-alpha-aminoacyl-[protein] + tRNA(Phe). Functions in the N-end rule pathway of protein degradation where it conjugates Leu, Phe and, less efficiently, Met from aminoacyl-tRNAs to the N-termini of proteins containing an N-terminal arginine or lysine. The polypeptide is Leucyl/phenylalanyl-tRNA--protein transferase (Thermodesulfovibrio yellowstonii (strain ATCC 51303 / DSM 11347 / YP87)).